The chain runs to 534 residues: Dolichol kinase (534 aa).

The Cytoplasmic segment spans residues 1–16 (MTRQCPPQESGAALSG). Residues 17 to 37 (SVLAEAAVVFAVVLSIHAAVW) form a helical membrane-spanning segment. The Extracellular portion of the chain corresponds to 38 to 72 (DRYSWCAVALAVQAFYVQYKWDRLLQQGNAVFQFR). The chain crosses the membrane as a helical span at residues 73–93 (MSANSGLLPASMVMPLLGLVM). Residues 94 to 109 (KERCQTAGNPYFERFG) are Cytoplasmic-facing. The helical transmembrane segment at 110–130 (IVVAATGMAVALFSSVLALGI) threads the bilayer. Residues 131–132 (TR) lie on the Extracellular side of the membrane. The helical transmembrane segment at 133–153 (PVPTNTCAISGLAGGVIIYIM) threads the bilayer. Over 154–161 (RHSLSVGE) the chain is Cytoplasmic. A helical transmembrane segment spans residues 162–182 (VIEVLEVLLIFVYLNMILLYL). Over 183 to 186 (LPRC) the chain is Extracellular. Residues 187 to 207 (FTPGEALLVLGGISFVLNQLI) form a helical membrane-spanning segment. Over 208–220 (KRSLTESQGDPVD) the chain is Cytoplasmic. Residues 221–241 (FFLLVVVVGMVLMGVFFSTLF) traverse the membrane as a helical segment. Residues 242 to 252 (VFMDSGTWASS) lie on the Extracellular side of the membrane. The helical transmembrane segment at 253 to 273 (IFFHLMTCVLGLGVVLPWLHW) threads the bilayer. Residues 274–293 (LIRRNPLLWLLQFLFYTETR) lie on the Cytoplasmic side of the membrane. Residues 294 to 314 (IYLLAYWSLLASVACLVVLYQ) form a helical membrane-spanning segment. At 315-333 (NAKRSSSESKKHRAPTITR) the chain is on the extracellular side. Residues 334 to 350 (KYFHFIVVATYIPGIIF) form a helical membrane-spanning segment. The Cytoplasmic portion of the chain corresponds to 351 to 355 (DRPLL). Residues 356–376 (YVAATVCLAVFIFLEYVRYFR) traverse the membrane as a helical segment. Topologically, residues 377-397 (IKPLGHTLRSLLSLFLDERDS) are extracellular. The helical transmembrane segment at 398–418 (GPLILTHIYLLLGMSLPIWLI) threads the bilayer. Over 419–432 (PRPCTQKDSLEGAR) the chain is Cytoplasmic. Residues 433 to 453 (ALVPYAGVLAVGVGDTVASIF) traverse the membrane as a helical segment. Topologically, residues 454-468 (GSTMGEIRWPGTKKT) are extracellular. Residues 455–470 (STMGEIRWPGTKKTFE) are CTP-binding. Residues 469 to 489 (FEGTMTSIFAQIISVALILIF) form a helical membrane-spanning segment. Residues 490 to 491 (DS) are Cytoplasmic-facing. The chain crosses the membrane as a helical span at residues 492–512 (GVDLNYSYAWILGSISTVSLL). At 513–534 (EAYTTQIDNLLLPLYLLILLMA) the chain is on the extracellular side.

This sequence belongs to the polyprenol kinase family.

It is found in the endoplasmic reticulum membrane. It catalyses the reaction a di-trans,poly-cis-dolichol + CTP = a di-trans,poly-cis-dolichyl phosphate + CDP + H(+). Its pathway is protein modification; protein glycosylation. Functionally, catalyzes CTP-mediated phosphorylation of dolichol, the terminal step in de novo dolichyl monophosphate (Dol-P) biosynthesis. Dol-P is a lipid carrier essential for the synthesis of N-linked and O-linked oligosaccharides and for GPI anchors. This Mus musculus (Mouse) protein is Dolichol kinase.